Reading from the N-terminus, the 247-residue chain is NH(3)-dependent NAD(+) synthetase (247 aa).

29 to 36 lines the ATP pocket; that stretch reads GLSGGVDS. Asp35 contacts Mg(2+). A deamido-NAD(+)-binding site is contributed by Arg112. Residue Thr132 coordinates ATP. Mg(2+) is bound at residue Glu137. Deamido-NAD(+)-binding residues include Lys145 and Asp152. Lys161 and Ser183 together coordinate ATP. 233-234 provides a ligand contact to deamido-NAD(+); the sequence is HK.

This sequence belongs to the NAD synthetase family. As to quaternary structure, homodimer.

The catalysed reaction is deamido-NAD(+) + NH4(+) + ATP = AMP + diphosphate + NAD(+) + H(+). Its pathway is cofactor biosynthesis; NAD(+) biosynthesis; NAD(+) from deamido-NAD(+) (ammonia route): step 1/1. Catalyzes the ATP-dependent amidation of deamido-NAD to form NAD. Uses ammonia as a nitrogen source. The sequence is that of NH(3)-dependent NAD(+) synthetase from Archaeoglobus fulgidus (strain ATCC 49558 / DSM 4304 / JCM 9628 / NBRC 100126 / VC-16).